A 520-amino-acid polypeptide reads, in one-letter code: ADP,ATP carrier protein 4 (520 aa).

12 helical membrane-spanning segments follow: residues 43 to 63 (LSKF…QNLI), 80 to 100 (ISFL…AIYV), 111 to 131 (IFYL…YVIF), 166 to 186 (FSLF…LLFW), 201 to 221 (FYPL…QFLE), 240 to 260 (FHTL…IVGI), 305 to 325 (LIAT…GPWK), 339 to 359 (AAFI…FVVL), 370 to 390 (FTAA…FFAV), 399 to 419 (LIVA…IGAI), 462 to 482 (LGKS…PSAS), and 485 to 505 (SISV…FWAV).

Belongs to the ADP/ATP translocase tlc family.

Its subcellular location is the cell membrane. Functionally, provides the rickettsial cell with host ATP in exchange for rickettsial ADP. This is an obligate exchange system. This energy acquiring activity is an important component of rickettsial parasitism. This chain is ADP,ATP carrier protein 4 (tlcD), found in Rickettsia bellii (strain RML369-C).